The sequence spans 235 residues: Sugar fermentation stimulation protein homolog (235 aa).

It belongs to the SfsA family.

This Pseudomonas aeruginosa (strain LESB58) protein is Sugar fermentation stimulation protein homolog.